We begin with the raw amino-acid sequence, 359 residues long: Protein RecA (359 aa).

74 to 81 (GPESSGKT) lines the ATP pocket.

This sequence belongs to the RecA family.

It localises to the cytoplasm. Functionally, can catalyze the hydrolysis of ATP in the presence of single-stranded DNA, the ATP-dependent uptake of single-stranded DNA by duplex DNA, and the ATP-dependent hybridization of homologous single-stranded DNAs. It interacts with LexA causing its activation and leading to its autocatalytic cleavage. This is Protein RecA from Anaplasma marginale (strain Florida).